The following is a 185-amino-acid chain: Ribosome-recycling factor (185 aa).

This sequence belongs to the RRF family.

It is found in the cytoplasm. Responsible for the release of ribosomes from messenger RNA at the termination of protein biosynthesis. May increase the efficiency of translation by recycling ribosomes from one round of translation to another. The sequence is that of Ribosome-recycling factor from Ectopseudomonas mendocina (strain ymp) (Pseudomonas mendocina).